Reading from the N-terminus, the 295-residue chain is N-acetylmuramic acid 6-phosphate etherase (295 aa).

Residues 54-217 (VIAAFRRGGR…STASMVGIGK (164 aa)) form the SIS domain. Catalysis depends on glutamate 82, which acts as the Proton donor. Glutamate 113 is an active-site residue.

It belongs to the GCKR-like family. MurNAc-6-P etherase subfamily. Homodimer.

The enzyme catalyses N-acetyl-D-muramate 6-phosphate + H2O = N-acetyl-D-glucosamine 6-phosphate + (R)-lactate. The protein operates within amino-sugar metabolism; N-acetylmuramate degradation. Specifically catalyzes the cleavage of the D-lactyl ether substituent of MurNAc 6-phosphate, producing GlcNAc 6-phosphate and D-lactate. This chain is N-acetylmuramic acid 6-phosphate etherase, found in Geobacillus thermodenitrificans (strain NG80-2).